Consider the following 206-residue polypeptide: Putative amino-acid transporter YggA (206 aa).

Helical transmembrane passes span 1–21 (MFAT…PIGA), 37–57 (LLAA…GVFG), 65–85 (SPIG…WFGI), 116–136 (LGVT…LGSF), 148–168 (FAAG…FGAA), and 185–205 (TIVG…ALLA).

The protein belongs to the LysE/ArgO transporter (TC 2.A.75) family.

It is found in the cell membrane. This is Putative amino-acid transporter YggA (yggA) from Aeromonas salmonicida.